A 371-amino-acid chain; its full sequence is Opine oxidase subunit B (371 aa).

Heterodimer of a subunit A and a subunit B.

The protein operates within opine metabolism; octopine degradation. Oxidative cleavage of octopine into L-arginine and pyruvate. The polypeptide is Opine oxidase subunit B (ooxB) (Agrobacterium tumefaciens (strain Ach5)).